Reading from the N-terminus, the 254-residue chain is MAISLKRNRFFIPYTNLVFFFFLCVSLLDKTVSIRISNQISDTVVDSPDRPLKSAVFALGSFWRSEAAFGCINGVVRTSAGYAGGTKTNPEYRNLGDHAESVQVEYDPRIIGYRQLLDVFWSSHDSRQVFGQGPDVGNQYRSCIFTNSTEELRLASTSKEREQLNTRSSIVTTQIQQLGTFYRAEPDHQKFELKQHPFLIQLIGNMVEEELERSALATKLNGYAAELCPPRIQKHIDSRVNEIIRKGWPVLRDI.

The signal sequence occupies residues 1-33 (MAISLKRNRFFIPYTNLVFFFFLCVSLLDKTVS).

It belongs to the MsrA Met sulfoxide reductase family.

It carries out the reaction L-methionyl-[protein] + [thioredoxin]-disulfide + H2O = L-methionyl-(S)-S-oxide-[protein] + [thioredoxin]-dithiol. It catalyses the reaction [thioredoxin]-disulfide + L-methionine + H2O = L-methionine (S)-S-oxide + [thioredoxin]-dithiol. Functionally, catalyzes the reduction of methionine sulfoxide (MetSO) to methionine in proteins. Plays a protective role against oxidative stress by restoring activity to proteins that have been inactivated by methionine oxidation. MSRA family specifically reduces the MetSO S-enantiomer. This Arabidopsis thaliana (Mouse-ear cress) protein is Peptide methionine sulfoxide reductase A5 (MSRA5).